A 400-amino-acid chain; its full sequence is MRKLTILGATGSIGSSTLSVAKQNSDQFEVVALGAGTNVDKMLELCLEWKPKYVAMATQPAADELKELLSAHAINAEVFSGEDGLCHIAQLDEVDTVMAAIVGAAGLLPTMSAVKAGKRILLANKEALVMSGQLFIDAVEKYGAELLPVDSEHNAIFQCLPQSIQTNLGRCDLEEHGVSSILLTGSGGPFRYTDVSELEAVTPEMAIAHPNWSMGPKISVDSATMMNKGLEYIEARWLFNASKDQLKVVIHPQSVIHSMVQYKDGSVLAQMGLPDMRTPIACTMSYPKRVDAGVEPLDFTKVGEFTFIAPDFARYPCLKLAIDACYLGQHATTGLNAANEQAVAAFLANKIKFTDIARINEAVLHKVCANFQNLELDSLESLIDLDRMARRYADEAINKV.

The NADPH site is built by Thr-10, Gly-11, Ser-12, Ile-13, Gly-36, Asn-38, and Asn-124. Residue Lys-125 participates in 1-deoxy-D-xylulose 5-phosphate binding. Glu-126 is a binding site for NADPH. Asp-150 is a binding site for Mn(2+). 1-deoxy-D-xylulose 5-phosphate is bound by residues Ser-151, Glu-152, Ser-186, and His-209. Glu-152 contacts Mn(2+). Gly-215 provides a ligand contact to NADPH. 4 residues coordinate 1-deoxy-D-xylulose 5-phosphate: Ser-222, Asn-227, Lys-228, and Glu-231. Mn(2+) is bound at residue Glu-231.

This sequence belongs to the DXR family. Mg(2+) serves as cofactor. It depends on Mn(2+) as a cofactor.

It catalyses the reaction 2-C-methyl-D-erythritol 4-phosphate + NADP(+) = 1-deoxy-D-xylulose 5-phosphate + NADPH + H(+). The protein operates within isoprenoid biosynthesis; isopentenyl diphosphate biosynthesis via DXP pathway; isopentenyl diphosphate from 1-deoxy-D-xylulose 5-phosphate: step 1/6. Functionally, catalyzes the NADPH-dependent rearrangement and reduction of 1-deoxy-D-xylulose-5-phosphate (DXP) to 2-C-methyl-D-erythritol 4-phosphate (MEP). In Aliivibrio fischeri (strain ATCC 700601 / ES114) (Vibrio fischeri), this protein is 1-deoxy-D-xylulose 5-phosphate reductoisomerase.